The chain runs to 441 residues: GTPase Der (441 aa).

EngA-type G domains lie at 3–167 and 176–351; these read PLIA…PNKT and TRIA…EQFA. GTP-binding positions include 9-16, 56-60, 119-122, 182-189, 229-233, and 294-297; these read GRPNVGKS, DTGGF, NKID, DTAGI, and NKWD. Residues 352 to 436 form the KH-like domain; that stretch reads KRISTSDLNR…PMRLLFKGRE (85 aa).

It belongs to the TRAFAC class TrmE-Era-EngA-EngB-Septin-like GTPase superfamily. EngA (Der) GTPase family. In terms of assembly, associates with the 50S ribosomal subunit.

Functionally, GTPase that plays an essential role in the late steps of ribosome biogenesis. The sequence is that of GTPase Der from Geotalea daltonii (strain DSM 22248 / JCM 15807 / FRC-32) (Geobacter daltonii).